A 396-amino-acid polypeptide reads, in one-letter code: Elongation factor Tu (396 aa).

In terms of domain architecture, tr-type G spans 11 to 205 (KPHVNIGTIG…TVDEYIPTPE (195 aa)). The tract at residues 20 to 27 (GHVDHGKT) is G1. A GTP-binding site is contributed by 20–27 (GHVDHGKT). Thr-27 serves as a coordination point for Mg(2+). Positions 61-65 (GITIN) are G2. The interval 82–85 (DAPG) is G3. GTP is bound by residues 82–86 (DAPGH) and 137–140 (NKVD). The tract at residues 137–140 (NKVD) is G4. Residues 175–177 (SAL) form a G5 region.

The protein belongs to the TRAFAC class translation factor GTPase superfamily. Classic translation factor GTPase family. EF-Tu/EF-1A subfamily. Monomer.

The protein localises to the cytoplasm. The catalysed reaction is GTP + H2O = GDP + phosphate + H(+). In terms of biological role, GTP hydrolase that promotes the GTP-dependent binding of aminoacyl-tRNA to the A-site of ribosomes during protein biosynthesis. This Lactobacillus gasseri (strain ATCC 33323 / DSM 20243 / BCRC 14619 / CIP 102991 / JCM 1131 / KCTC 3163 / NCIMB 11718 / NCTC 13722 / AM63) protein is Elongation factor Tu.